The sequence spans 369 residues: Chaperone protein DnaJ (369 aa).

Residues 3-67 (DHYEVLGVER…QQRQQYDRGG (65 aa)) form the J domain. The CR-type zinc-finger motif lies at 123-205 (GAHRDLEVDT…CQGQGRVRAR (83 aa)). Positions 136, 139, 153, 156, 179, 182, 193, and 196 each coordinate Zn(2+). CXXCXGXG motif repeat units lie at residues 136–143 (CETCDGSC), 153–160 (CDICHGTG), 179–186 (CGSCRGYG), and 193–200 (CVTCQGQG).

Belongs to the DnaJ family. As to quaternary structure, homodimer. Zn(2+) serves as cofactor.

It localises to the cytoplasm. Participates actively in the response to hyperosmotic and heat shock by preventing the aggregation of stress-denatured proteins and by disaggregating proteins, also in an autonomous, DnaK-independent fashion. Unfolded proteins bind initially to DnaJ; upon interaction with the DnaJ-bound protein, DnaK hydrolyzes its bound ATP, resulting in the formation of a stable complex. GrpE releases ADP from DnaK; ATP binding to DnaK triggers the release of the substrate protein, thus completing the reaction cycle. Several rounds of ATP-dependent interactions between DnaJ, DnaK and GrpE are required for fully efficient folding. Also involved, together with DnaK and GrpE, in the DNA replication of plasmids through activation of initiation proteins. The polypeptide is Chaperone protein DnaJ (Leifsonia xyli subsp. xyli (strain CTCB07)).